Consider the following 77-residue polypeptide: Spermatid-specific protein T2 (77 aa).

The hydrophobic stretch occupies residues 1–21 (MKVAANTSKMLVEKLDLLKGG). The tract at residues 1-77 (MKVAANTSKM…YSRRRYRRRR (77 aa)) is disordered. A compositionally biased stretch (basic residues) spans 20 to 77 (GGRRRRRRSRRRRRSRRRRSRSPYRRRYRRRRRRRRSRRRRRYRRRRSYSRRRYRRRR).

Phosphorylation occurs at different degrees. The triphosphorylated form may be predominant in T2. SP2 appears to be phosphorylated in elongated spermatids, but dephosphorylated in mature sperm cells. In terms of tissue distribution, testis.

It is found in the nucleus. The protein resides in the chromosome. Its function is as follows. Cuttlefish spermiogenesis is characterized by a double nuclear protein transition: histones -&gt; spermatid-specific proteins (T1/T2) -&gt; protamines (SP1/SP2). The protamines compact sperm DNA into a highly condensed, stable and inactive complex. The sequence is that of Spermatid-specific protein T2 from Sepia officinalis (Common cuttlefish).